Consider the following 150-residue polypeptide: Glycine/sarcosine/betaine reductase complex component A (150 aa).

U43 is an active-site residue. A non-standard amino acid (selenocysteine) is located at residue U43.

This sequence belongs to the GrdA family. As to quaternary structure, monomer. Component of the glycine, sarcosine and betaine reductase complexes, together with components B and C.

It catalyses the reaction acetyl phosphate + [thioredoxin]-disulfide + NH4(+) + H2O = [thioredoxin]-dithiol + glycine + phosphate + H(+). The enzyme catalyses acetyl phosphate + methylamine + [thioredoxin]-disulfide + H2O = sarcosine + [thioredoxin]-dithiol + phosphate + H(+). The catalysed reaction is acetyl phosphate + trimethylamine + [thioredoxin]-disulfide + H2O = glycine betaine + [thioredoxin]-dithiol + phosphate + H(+). Functionally, in the first step of glycine, betaine and sarcosine reductases, the substrate is bound to component PB via a Schiff base intermediate. Then the PB-activated substrate is nucleophilically attacked by the selenol anion of component PA to transform it to a carboxymethylated selenoether and the respective amine. By action of component PC, acetyl phosphate is formed, leaving component PA in its oxidized state. Finally component PA becomes reduced by the thioredoxin system to start a new catalytic cycle of reductive deamination. The polypeptide is Glycine/sarcosine/betaine reductase complex component A (grdA) (Gottschalkia purinilytica (Clostridium purinilyticum)).